The sequence spans 252 residues: 5-oxoprolinase subunit A (252 aa).

This sequence belongs to the LamB/PxpA family. Forms a complex composed of PxpA, PxpB and PxpC.

It catalyses the reaction 5-oxo-L-proline + ATP + 2 H2O = L-glutamate + ADP + phosphate + H(+). Functionally, catalyzes the cleavage of 5-oxoproline to form L-glutamate coupled to the hydrolysis of ATP to ADP and inorganic phosphate. In Kocuria rhizophila (strain ATCC 9341 / DSM 348 / NBRC 103217 / DC2201), this protein is 5-oxoprolinase subunit A.